Reading from the N-terminus, the 387-residue chain is Natterin-4 (387 aa).

Positions 1–18 are cleaved as a signal peptide; sequence MKLLVLLVTLLVLSWTSA. A propeptide spanning residues 19 to 46 is cleaved from the precursor; that stretch reads EDVGDQEILQQHNEDNNHKSELGEAAPQ. Basic and acidic residues predominate over residues 31 to 40; the sequence is NEDNNHKSEL. The interval 31-57 is disordered; it reads NEDNNHKSELGEAAPQRTDNETSQLGQ.

The protein belongs to the natterin family. Contains 4 disulfide bonds. In terms of tissue distribution, expressed by the venom gland.

The protein localises to the secreted. Inhibited by tissue-kallikrein inhibitor TKI and trasylol. Plasma kallikrein inhibitor PKSI527 and classical inhibitors of serine-, metallo-, thiol- or aspartate-peptidases evokes a minor inhibition of the peptide digestion. Functionally, shows nociceptive, edema-inducing and kininogenase activity with release of kallidin from low molecular weight kininogen. The cleavage occurs at Met-Lys bonds. This chain is Natterin-4, found in Thalassophryne nattereri (Copper Joe toadfish).